A 432-amino-acid chain; its full sequence is 5'-deoxyadenosine deaminase (432 aa).

Residues His63 and His65 each contribute to the Zn(2+) site. Residues Glu92 and His184 each contribute to the substrate site. Residue His211 coordinates Zn(2+). Substrate is bound by residues Glu214 and Asp299. Asp299 is a binding site for Zn(2+).

The protein belongs to the metallo-dependent hydrolases superfamily. MTA/SAH deaminase family. In terms of assembly, homotetramer. The cofactor is Zn(2+).

The enzyme catalyses 5'-deoxyadenosine + H2O + H(+) = 5'-deoxyinosine + NH4(+). The catalysed reaction is S-adenosyl-L-homocysteine + H2O + H(+) = S-inosyl-L-homocysteine + NH4(+). It carries out the reaction S-methyl-5'-thioadenosine + H2O + H(+) = S-methyl-5'-thioinosine + NH4(+). It catalyses the reaction adenosine + H2O + H(+) = inosine + NH4(+). It participates in amino-acid biosynthesis; S-adenosyl-L-methionine biosynthesis. Functionally, catalyzes the deamination of three SAM-derived enzymatic products, namely 5'-deoxyadenosine, S-adenosyl-L-homocysteine, and 5'-methylthioadenosine, to produce the inosine analogs. Can also deaminate adenosine. The preferred substrate for this enzyme is 5'-deoxyadenosine, but all these substrates are efficiently deaminated. Likely functions in a S-adenosyl-L-methionine (SAM) recycling pathway from S-adenosyl-L-homocysteine (SAH) produced from SAM-dependent methylation reactions. May also be involved in the recycling of 5'-deoxyadenosine, whereupon the 5'-deoxyribose moiety of 5'-deoxyinosine is further metabolized to deoxyhexoses used for the biosynthesis of aromatic amino acids in methanogens. In Methanosarcina acetivorans (strain ATCC 35395 / DSM 2834 / JCM 12185 / C2A), this protein is 5'-deoxyadenosine deaminase.